The sequence spans 351 residues: Mediator of RNA polymerase II transcription subunit 18 (351 aa).

The interval 153 to 231 (GNGDPIDIDT…LPQSLSNGVS (79 aa)) is disordered. Basic and acidic residues predominate over residues 163-204 (NNDKQGDNNTDKPKQEHDGKLPEAIDEDIIKNGDEKKTTHDD). A compositionally biased stretch (acidic residues) spans 205-216 (NDSDIMEIDEPN). Residues 217-231 (PETQTLPQSLSNGVS) show a composition bias toward polar residues.

It belongs to the Mediator complex subunit 18 family. In terms of assembly, component of the Mediator complex.

It is found in the nucleus. Functionally, component of the Mediator complex, a coactivator involved in the regulated transcription of nearly all RNA polymerase II-dependent genes. Mediator functions as a bridge to convey information from gene-specific regulatory proteins to the basal RNA polymerase II transcription machinery. Mediator is recruited to promoters by direct interactions with regulatory proteins and serves as a scaffold for the assembly of a functional preinitiation complex with RNA polymerase II and the general transcription factors. This Candida albicans (strain SC5314 / ATCC MYA-2876) (Yeast) protein is Mediator of RNA polymerase II transcription subunit 18 (SRB5).